A 498-amino-acid polypeptide reads, in one-letter code: ATP synthase subunit beta, chloroplastic (498 aa).

Residues methionine 1 to threonine 14 show a composition bias toward polar residues. The segment at methionine 1–threonine 20 is disordered. Glycine 172–threonine 179 is a binding site for ATP.

Belongs to the ATPase alpha/beta chains family. In terms of assembly, F-type ATPases have 2 components, CF(1) - the catalytic core - and CF(0) - the membrane proton channel. CF(1) has five subunits: alpha(3), beta(3), gamma(1), delta(1), epsilon(1). CF(0) has four main subunits: a(1), b(1), b'(1) and c(9-12).

Its subcellular location is the plastid. The protein localises to the chloroplast thylakoid membrane. It catalyses the reaction ATP + H2O + 4 H(+)(in) = ADP + phosphate + 5 H(+)(out). Produces ATP from ADP in the presence of a proton gradient across the membrane. The catalytic sites are hosted primarily by the beta subunits. The protein is ATP synthase subunit beta, chloroplastic of Hordeum vulgare (Barley).